The chain runs to 355 residues: Probable butyrate kinase (355 aa).

This sequence belongs to the acetokinase family.

The protein localises to the cytoplasm. The catalysed reaction is butanoate + ATP = butanoyl phosphate + ADP. This chain is Probable butyrate kinase, found in Clostridium botulinum (strain Alaska E43 / Type E3).